A 521-amino-acid chain; its full sequence is Cytochrome P450 monooxygenase gloO (521 aa).

The N-terminal stretch at 1 to 26 (MIAALFTTNLQLGAVGVFIFALLAFA) is a signal peptide. Heme is bound at residue cysteine 464.

The protein belongs to the cytochrome P450 family. Heme is required as a cofactor.

It functions in the pathway mycotoxin biosynthesis. Functionally, cytochrome P450 monooxygenase; part of the gene cluster that mediates the biosynthesis of pneumocandins, lipohexapeptides of the echinocandin family that prevent fungal cell wall formation by non-competitive inhibition of beta-1,3-glucan synthase. The 10,12-dimethylmyristoyl side chain is synthesized by the reducing polyketide synthase gloL/GLPKS4. The thioesterase gloN/GLHYD exclusively interacts with gloL/GLPKS4 to maintain turnover of the polyketide side chain. The 10R,12S-dimethylmyristic acid is then transferred to the first thiolation domain of the nonribosomal peptide synthetase gloA/GLNRPS4 by the acyl-AMP ligase gloD/GLligase, followed by its acylation to L-ornithine to trigger elongation of the cyclic hexapeptide. L-ornithine, 4R-hydroxyl-L-proline (generated from L-proline by the dioxygenase gloF/GLOXY2), 3S-hydroxyl-L-homotyrosine (generated by gloG/GLHtyB, gloH/GLHtyA, gloI/GLHtyC, gloJ/GLHtyD and hydroxylated at C-3 by the dioxygenase gloM/GLOXY1), 3R-hydroxyl-L-glutamine (generated from L-glutamine probably by the dioxygenase gloE/GLOXY3) and 3S-hydroxyl-L-proline (generated from L-proline by the dioxygenase gloF/GLOXY2 to yield pneumocandin B0), or 3S-hydroxyl-4S-methyl-L-proline (generated from L-leucine by the dioxygenase gloC/GLOXY4 to yield pneumocandin A0) are sequentially added to the growing chain. The last C domain of gloA/GLNRPS4 is proposed to be responsible for cyclization by condensation to form the peptide bond between L-ornithine and 3S-hydroxyl-4S-methyl-L-proline (for pneumocandin A0) or 3S-hydroxyl-L-proline (for pneumocandin B0). Finally, the subsequent C-4 hydroxylation of 3S-hydroxyl-L-homotyrosine and L-ornithine dihydroxylation at C-4 and C-5 are performed by the cytochrome P450 monooxygenases gloP/GLP450-1 and gloO/GLP450-2, respectively. This chain is Cytochrome P450 monooxygenase gloO, found in Glarea lozoyensis (strain ATCC 20868 / MF5171).